Reading from the N-terminus, the 199-residue chain is Pyridoxal 5'-phosphate synthase subunit PdxT (199 aa).

Glycine 49–serine 51 is an L-glutamine binding site. Catalysis depends on cysteine 81, which acts as the Nucleophile. Residues arginine 110 and isoleucine 139 to arginine 140 contribute to the L-glutamine site. Residues histidine 175 and glutamate 177 each act as charge relay system in the active site.

The protein belongs to the glutaminase PdxT/SNO family. In the presence of PdxS, forms a dodecamer of heterodimers. Only shows activity in the heterodimer.

The enzyme catalyses aldehydo-D-ribose 5-phosphate + D-glyceraldehyde 3-phosphate + L-glutamine = pyridoxal 5'-phosphate + L-glutamate + phosphate + 3 H2O + H(+). It carries out the reaction L-glutamine + H2O = L-glutamate + NH4(+). The protein operates within cofactor biosynthesis; pyridoxal 5'-phosphate biosynthesis. Functionally, catalyzes the hydrolysis of glutamine to glutamate and ammonia as part of the biosynthesis of pyridoxal 5'-phosphate. The resulting ammonia molecule is channeled to the active site of PdxS. The protein is Pyridoxal 5'-phosphate synthase subunit PdxT of Frankia casuarinae (strain DSM 45818 / CECT 9043 / HFP020203 / CcI3).